The primary structure comprises 86 residues: MAHHKGGGSSRNGKDSNPQYLGVKAYGGEKVKPGSIIVRQRGNHFWPGKNVGQGKDFTLFALAEGVVQFEKKGGKKFVSVIPNEQK.

Residues 1-21 (MAHHKGGGSSRNGKDSNPQYL) are disordered.

This sequence belongs to the bacterial ribosomal protein bL27 family.

This Coprothermobacter proteolyticus (strain ATCC 35245 / DSM 5265 / OCM 4 / BT) protein is Large ribosomal subunit protein bL27.